The chain runs to 238 residues: LRRN4 C-terminal-like protein (238 aa).

Positions 1–22 are cleaved as a signal peptide; it reads MLGSPCLLWLLAVTFLVPRAQP. Residues 23-194 lie on the Extracellular side of the membrane; that stretch reads LAPQDFEEEE…RLAVPPNPRT (172 aa). In terms of domain architecture, Fibronectin type-III spans 82–176; the sequence is PPDPPRMGEV…AGGEGLEGAD (95 aa). Asn-132 carries N-linked (GlcNAc...) asparagine glycosylation. The chain crosses the membrane as a helical span at residues 195 to 215; that stretch reads LVHAAVGVGTALALLSCAALV. The Cytoplasmic portion of the chain corresponds to 216 to 238; it reads WHFCLRDRWGCPRRAAARAAGAL.

It is found in the membrane. This Homo sapiens (Human) protein is LRRN4 C-terminal-like protein (LRRN4CL).